Reading from the N-terminus, the 330-residue chain is MAAVDSFYLLYREIARSCNCYMEALALVGAWYTARKSITVICDFYSLVRLHFIPRLGSRPDLIKQYGRWAVISGATDGIGKAYAEELASHGLNVILISQEEEKLQAAAKHIADTYRVETLVLVADFSRGREIYAPIREALRDRDIGILVNDVGAFYPYPQYFSQVPEDTLWDIVNVNIAAASLMVHIVLPGMVERKKGAIVTVSSGSCCKPTPQLAAFSASKAYLDHFSRALQYEYASKGIFVQSLIPFYVTSSGAAPASFLHRCPWLAPSPRVYAQHAVSTLGISKRTTGYWSHSIQFLFAQYMPEWLWVWGANLLNRSLRKEALSCQA.

Position 2 is an N-acetylalanine (alanine 2). The tract at residues 2-82 is required for mitochondria translocation; the sequence is AAVDSFYLLY…SGATDGIGKA (81 aa). Residues 74-80, aspartate 125, and lysine 222 contribute to the NADP(+) site; that span reads GATDGIG.

The protein belongs to the short-chain dehydrogenases/reductases (SDR) family. 17-beta-HSD 3 subfamily. In terms of assembly, interacts with STYXL1.

It is found in the mitochondrion. The chain is Inactive hydroxysteroid dehydrogenase-like protein 1 (Hsdl1) from Mus musculus (Mouse).